The chain runs to 163 residues: MAANTEQLTEEQIAEFKEAFALFDKDGDGTITTKELGTVMRSLGQNPTEAELQDMISEVDADGNGTIDFPEFLMLMARKMKETDHEDELREAFKVFDKDGNGFISAAELRHVMTNLGEKLSEEEVDEMIREADVDGDGQVNYEEFVRMMTSGATDDKDKKGHK.

A2 carries the N-acetylalanine modification. EF-hand domains follow at residues 11–46 (EQIA…LGQN), 47–82 (PTEA…KMKE), 84–119 (DHED…LGEK), and 120–155 (LSEE…GATD). Residues D24, D26, D28, T30, E35, D60, D62, N64, T66, E71, D97, D99, N101, E108, D133, D135, D137, Q139, and E144 each contribute to the Ca(2+) site.

This sequence belongs to the calmodulin family. In terms of assembly, associates with the spoke-associated complex containing CFAP61, CFAP91 and CFAP251; the association is calcium sensitive. Post-translationally, trimethylation of Lys-119 observed in other calmodulins is absent here.

Its subcellular location is the cytoplasm. The protein localises to the cytoskeleton. It localises to the flagellum axoneme. Its function is as follows. Calmodulin mediates the control of a large number of enzymes, ion channels and other proteins by Ca(2+). Among the enzymes to be stimulated by the calmodulin-Ca(2+) complex are a number of protein kinases and phosphatases. The sequence is that of Calmodulin from Chlamydomonas reinhardtii (Chlamydomonas smithii).